Consider the following 151-residue polypeptide: Transcriptional repressor NrdR (151 aa).

The segment at 3–34 (CPFCGYSESKVVDSRSTEDNMAIRRRRECLEC) is a zinc-finger region. Residues 49–139 (ILVIKKDSSR…VYRQFKDINT (91 aa)) enclose the ATP-cone domain.

Belongs to the NrdR family. Zn(2+) is required as a cofactor.

In terms of biological role, negatively regulates transcription of bacterial ribonucleotide reductase nrd genes and operons by binding to NrdR-boxes. This is Transcriptional repressor NrdR from Clostridium acetobutylicum (strain ATCC 824 / DSM 792 / JCM 1419 / IAM 19013 / LMG 5710 / NBRC 13948 / NRRL B-527 / VKM B-1787 / 2291 / W).